The chain runs to 387 residues: Phosphoglycerate kinase (387 aa).

Residues 21–23, Arg36, 59–62, Arg113, and Arg146 each bind substrate; these read DLN and HLGR. ATP-binding positions include Lys197, Glu314, and 340-343; that span reads GGDT.

It belongs to the phosphoglycerate kinase family. As to quaternary structure, monomer.

Its subcellular location is the cytoplasm. It carries out the reaction (2R)-3-phosphoglycerate + ATP = (2R)-3-phospho-glyceroyl phosphate + ADP. It functions in the pathway carbohydrate degradation; glycolysis; pyruvate from D-glyceraldehyde 3-phosphate: step 2/5. This Marinomonas sp. (strain MWYL1) protein is Phosphoglycerate kinase.